A 360-amino-acid chain; its full sequence is MQIIRHSEQTLKTALISKNPVLVSQYEKLDAGEQRLMNEAFQPASDLFGPITLHSPSDWITSHPEAPQDFEQFFSDPYRKTPSPNKRSIYIQSIGSLGNTRIISEEYIKWVTGYCKAYFYGLRVKLLEPVPVSATRCSFRVNENTHNLQIHAGDILKFLKKKKPEDAFCVVGITMIDLYPRDSWNFVFGQASLTDGVGIFSFARYGSDFYSMRYEGKVKKLKKTSSSDYSIFDNYYIPEITSVLLLRSCKTLTHEIGHIFGLRHCQWLACLMQGSNHLEEADRRPLNLCPICLRKLQCAIGFSTVERYKALVRWIDDESSDTPGATPEHSCEDNGNLPKPVEAFKEWKEWIIKCLAVLQK.

H254 serves as a coordination point for Zn(2+). Residue E255 is the Proton acceptor of the active site. Residues H258, H264, C265, C270, C289, and C292 each contribute to the Zn(2+) site.

This sequence belongs to the peptidase M54 family. Requires Zn(2+) as cofactor.

Functionally, probable zinc metalloprotease. The chain is Archaemetzincin-2 (AMZ2) from Pongo abelii (Sumatran orangutan).